A 502-amino-acid polypeptide reads, in one-letter code: Type II secretion system protein E (502 aa).

263-270 (GPTGSGKT) serves as a coordination point for ATP. Zn(2+)-binding residues include cysteine 396, cysteine 399, cysteine 429, and cysteine 432. The interval 461–480 (SSEQEMTRHARTSGPSIRDD) is disordered.

Belongs to the GSP E family. In terms of assembly, homodimer. Dimerization is directed by a relatively short domain near the extreme N-terminus and is essential for extracellular protein secretion. May form homooligomers. Interacts with XcpY/GspL. Forms an inner membrane platform subcomplex with XcpS/GspF, XcpY/GspL and XcpZ/GspM. Requires Zn(2+) as cofactor.

The protein localises to the cell inner membrane. It catalyses the reaction ATP + H2O + cellular proteinSide 1 = ADP + phosphate + cellular proteinSide 2.. ATPase component of the type II secretion system required for the energy-dependent secretion of extracellular factors such as proteases and toxins from the periplasm. Acts as a molecular motor to provide the energy that is required for assembly of the pseudopilus and the extrusion of substrates generated in the cytoplasm. The polypeptide is Type II secretion system protein E (xcpR) (Pseudomonas aeruginosa (strain ATCC 15692 / DSM 22644 / CIP 104116 / JCM 14847 / LMG 12228 / 1C / PRS 101 / PAO1)).